A 361-amino-acid chain; its full sequence is Adenosine kinase (361 aa).

A Nuclear localization signal motif is present at residues 7 to 15 (PKPKKLKVE). Adenosine is bound at residue D34. S48 contacts Mg(2+). At Y76 the chain carries Phosphotyrosine. A Mg(2+)-binding site is contributed by N147. Q305 contacts adenosine. D316 is an active-site residue. The active-site Proton acceptor is D316.

Belongs to the carbohydrate kinase PfkB family. In terms of assembly, monomer. The cofactor is Mg(2+). As to expression, widely expressed. Highly expressed in liver, testis, kidney and spleen (at protein level). In brain, expression in most forebrain structures and the cerebellum is higher than in the midbrain and brainstem (at protein level). In terms of tissue distribution, major isoform in testis and kidney. Not detected in most brain regions, except in the cerebellum, where it is expressed at a similar level to that of isoform 2 (at protein level). Major isoform in spleen and in most brain regions, except in the cerebellum, where it is expressed at a similar level to that of isoform 1 (at protein level).

The protein localises to the nucleus. It is found in the cytoplasm. It carries out the reaction adenosine + ATP = AMP + ADP + H(+). It participates in purine metabolism; AMP biosynthesis via salvage pathway; AMP from adenosine: step 1/1. With respect to regulation, activity is inhibited by 5-iodotubercidin and 5'-amino-5'-deoxyadenosine. Its function is as follows. Catalyzes the phosphorylation of the purine nucleoside adenosine at the 5' position in an ATP-dependent manner. Serves as a potential regulator of concentrations of extracellular adenosine and intracellular adenine nucleotides. The protein is Adenosine kinase (Adk) of Mus musculus (Mouse).